The primary structure comprises 934 residues: Serine/threonine-protein kinase PknD (934 aa).

A Protein kinase domain is found at 4–296 (YELIRLIGKG…ELRQALQPYL (293 aa)). Residues 10–18 (IGKGGMGEV) and K33 contribute to the ATP site. Catalysis depends on D138, which acts as the Proton acceptor.

This sequence belongs to the protein kinase superfamily. Ser/Thr protein kinase family. As to quaternary structure, interacts with Pkn1. Autophosphorylated on serine and threonine residues. Present in elementary bodies 40 hours post-infection as 2 bands of approximately 55 to 60 and 45 to 50 kDa, which may be due to differential phosphorylation as well as degradation; an enzymatically active full-length protein can also be detected.

The enzyme catalyses L-seryl-[protein] + ATP = O-phospho-L-seryl-[protein] + ADP + H(+). The catalysed reaction is L-threonyl-[protein] + ATP = O-phospho-L-threonyl-[protein] + ADP + H(+). Its function is as follows. Together with the serine/threonine kinase Pkn1, may play a role in the specific interactions with host proteins during intracellular growth. Autophosphorylates and also phosphorylates Pkn1. In Chlamydia trachomatis serovar L2 (strain ATCC VR-902B / DSM 19102 / 434/Bu), this protein is Serine/threonine-protein kinase PknD.